Here is a 563-residue protein sequence, read N- to C-terminus: F-box/kelch-repeat protein At5g42350 (563 aa).

An F-box domain is found at 129–175 (YRKHVYLPDDILEMCLMRLPLTSLLNAHLVCKKWQSMANTQRFLQMR). Kelch repeat units follow at residues 184–231 (WLFL…SIHE), 232–282 (EIYI…ATEV), and 355–402 (VLIA…IICN).

In Arabidopsis thaliana (Mouse-ear cress), this protein is F-box/kelch-repeat protein At5g42350.